Here is a 261-residue protein sequence, read N- to C-terminus: GTP cyclohydrolase FolE2 (261 aa).

It belongs to the GTP cyclohydrolase IV family.

The catalysed reaction is GTP + H2O = 7,8-dihydroneopterin 3'-triphosphate + formate + H(+). The protein operates within cofactor biosynthesis; 7,8-dihydroneopterin triphosphate biosynthesis; 7,8-dihydroneopterin triphosphate from GTP: step 1/1. Its function is as follows. Converts GTP to 7,8-dihydroneopterin triphosphate. The polypeptide is GTP cyclohydrolase FolE2 (Fervidobacterium nodosum (strain ATCC 35602 / DSM 5306 / Rt17-B1)).